Here is a 1025-residue protein sequence, read N- to C-terminus: Multidrug resistance protein MdtC (1025 aa).

A run of 12 helical transmembrane segments spans residues F3 to L23, E333 to L353, I360 to C380, L387 to L407, V431 to L451, F463 to P483, L528 to P548, V853 to S873, V875 to L895, L897 to V917, P953 to G973, and I984 to V1004.

The protein belongs to the resistance-nodulation-cell division (RND) (TC 2.A.6) family. MdtC subfamily. In terms of assembly, part of a tripartite efflux system composed of MdtA, MdtB and MdtC. MdtC forms a heteromultimer with MdtB.

It localises to the cell inner membrane. Functionally, the MdtABC tripartite complex confers resistance against novobiocin and deoxycholate. The chain is Multidrug resistance protein MdtC from Escherichia coli (strain UTI89 / UPEC).